A 499-amino-acid polypeptide reads, in one-letter code: Cytochrome P450 710A2 (499 aa).

Residues 5 to 25 (VSIFASLAPYLVSALLLFFLI) traverse the membrane as a helical segment. A heme-binding site is contributed by Cys-439.

This sequence belongs to the cytochrome P450 family. It depends on heme as a cofactor. Expressed in the vascular tissues of roots, shoots, stems and leaves. Expressed in root tips, carpes, siliques and seeds.

The protein localises to the membrane. It carries out the reaction 5-dehydroepisterol + NADPH + O2 + H(+) = ergosta-5,7,22,24(28)-tetraen-3beta-ol + NADP(+) + 2 H2O. It participates in steroid biosynthesis; sterol biosynthesis. Required to form the C-22 double bond in the sterol side chain. Possesses in vitro C-22 desaturase activity toward 24-epi-campesterol and beta-sitosterol and produces brassicasterol and stigmasterol, respectively. No activity with campesterol. The polypeptide is Cytochrome P450 710A2 (Arabidopsis thaliana (Mouse-ear cress)).